Consider the following 282-residue polypeptide: TPR repeat protein oca3 (282 aa).

TPR repeat units lie at residues 16-50 (IVAL…ALTT), 71-104 (PRVE…DPTH), 139-172 (LEAW…QPFE), and 174-211 (RLFA…CEEY).

It is found in the cytoplasm. Its subcellular location is the nucleus. In terms of biological role, may be involved in cell cycle regulation. The protein is TPR repeat protein oca3 (oca3) of Schizosaccharomyces pombe (strain 972 / ATCC 24843) (Fission yeast).